Here is a 62-residue protein sequence, read N- to C-terminus: Photosystem II reaction center protein Z (62 aa).

Transmembrane regions (helical) follow at residues 8-28 (ALAALVALSFLMVIGVPVAYA) and 41-61 (FVGSIAWTVLVIAVGVLNFFV).

Belongs to the PsbZ family. PSII is composed of 1 copy each of membrane proteins PsbA, PsbB, PsbC, PsbD, PsbE, PsbF, PsbH, PsbI, PsbJ, PsbK, PsbL, PsbM, PsbT, PsbX, PsbY, PsbZ, Psb30/Ycf12, peripheral proteins PsbO, CyanoQ (PsbQ), PsbU, PsbV and a large number of cofactors. It forms dimeric complexes.

The protein resides in the cellular thylakoid membrane. Its function is as follows. May control the interaction of photosystem II (PSII) cores with the light-harvesting antenna, regulates electron flow through the 2 photosystem reaction centers. PSII is a light-driven water plastoquinone oxidoreductase, using light energy to abstract electrons from H(2)O, generating a proton gradient subsequently used for ATP formation. The sequence is that of Photosystem II reaction center protein Z from Picosynechococcus sp. (strain ATCC 27264 / PCC 7002 / PR-6) (Agmenellum quadruplicatum).